The primary structure comprises 164 residues: Proline-rich protein 2 (164 aa).

Residues 1–21 form the signal peptide; it reads MNLKVGIAVLIIALIVPSAQP.

Component of the acid-soluble organic matrix of calcified layers of the shell (at protein level).

The protein resides in the secreted. The polypeptide is Proline-rich protein 2 (Lottia gigantea (Giant owl limpet)).